The following is an 89-amino-acid chain: UPF0335 protein Nham_1221 (89 aa).

The protein belongs to the UPF0335 family.

This Nitrobacter hamburgensis (strain DSM 10229 / NCIMB 13809 / X14) protein is UPF0335 protein Nham_1221.